We begin with the raw amino-acid sequence, 95 residues long: Large ribosomal subunit protein bL28 (95 aa).

The tract at residues 1 to 28 (MARKRTLGGKAPQAGNKVSHSQRKTRRQ) is disordered.

It belongs to the bacterial ribosomal protein bL28 family.

The protein is Large ribosomal subunit protein bL28 of Magnetococcus marinus (strain ATCC BAA-1437 / JCM 17883 / MC-1).